Consider the following 229-residue polypeptide: Cytochrome c oxidase subunit 2 (229 aa).

The Mitochondrial intermembrane segment spans residues methionine 1–histidine 26. The chain crosses the membrane as a helical span at residues alanine 27–asparagine 48. At serine 49–glutamate 62 the chain is on the mitochondrial matrix side. A helical transmembrane segment spans residues methionine 63 to arginine 82. Topologically, residues leucine 83 to serine 229 are mitochondrial intermembrane. Residues histidine 161, cysteine 196, glutamate 198, cysteine 200, histidine 204, and methionine 207 each coordinate Cu cation. Glutamate 198 lines the Mg(2+) pocket.

It belongs to the cytochrome c oxidase subunit 2 family. As to quaternary structure, component of the cytochrome c oxidase (complex IV, CIV), a multisubunit enzyme composed of a catalytic core of 3 subunits and several supernumerary subunits. The complex exists as a monomer or a dimer and forms supercomplexes (SCs) in the inner mitochondrial membrane with ubiquinol-cytochrome c oxidoreductase (cytochrome b-c1 complex, complex III, CIII). Cu cation serves as cofactor.

It localises to the mitochondrion inner membrane. The catalysed reaction is 4 Fe(II)-[cytochrome c] + O2 + 8 H(+)(in) = 4 Fe(III)-[cytochrome c] + 2 H2O + 4 H(+)(out). In terms of biological role, component of the cytochrome c oxidase, the last enzyme in the mitochondrial electron transport chain which drives oxidative phosphorylation. The respiratory chain contains 3 multisubunit complexes succinate dehydrogenase (complex II, CII), ubiquinol-cytochrome c oxidoreductase (cytochrome b-c1 complex, complex III, CIII) and cytochrome c oxidase (complex IV, CIV), that cooperate to transfer electrons derived from NADH and succinate to molecular oxygen, creating an electrochemical gradient over the inner membrane that drives transmembrane transport and the ATP synthase. Cytochrome c oxidase is the component of the respiratory chain that catalyzes the reduction of oxygen to water. Electrons originating from reduced cytochrome c in the intermembrane space (IMS) are transferred via the dinuclear copper A center (CU(A)) of subunit 2 and heme A of subunit 1 to the active site in subunit 1, a binuclear center (BNC) formed by heme A3 and copper B (CU(B)). The BNC reduces molecular oxygen to 2 water molecules using 4 electrons from cytochrome c in the IMS and 4 protons from the mitochondrial matrix. The sequence is that of Cytochrome c oxidase subunit 2 (mt:CoII) from Drosophila narragansett (Fruit fly).